The sequence spans 216 residues: UPF0502 protein Smal_0052 (216 aa).

The protein belongs to the UPF0502 family.

This Stenotrophomonas maltophilia (strain R551-3) protein is UPF0502 protein Smal_0052.